A 96-amino-acid chain; its full sequence is UPF0235 protein YggU (96 aa).

This sequence belongs to the UPF0235 family.

The polypeptide is UPF0235 protein YggU (Escherichia coli O127:H6 (strain E2348/69 / EPEC)).